The sequence spans 378 residues: uncharacterized protein (378 aa).

This is an uncharacterized protein from Nostoc sp. (strain PCC 7120 / SAG 25.82 / UTEX 2576).